An 80-amino-acid polypeptide reads, in one-letter code: Acyl carrier protein (80 aa).

Residues 4-79 form the Carrier domain; sequence NSIEEKVRSI…DVVAYIEKVQ (76 aa). Serine 39 is subject to O-(pantetheine 4'-phosphoryl)serine.

Belongs to the acyl carrier protein (ACP) family. Post-translationally, 4'-phosphopantetheine is transferred from CoA to a specific serine of apo-ACP by AcpS. This modification is essential for activity because fatty acids are bound in thioester linkage to the sulfhydryl of the prosthetic group.

It is found in the cytoplasm. It functions in the pathway lipid metabolism; fatty acid biosynthesis. Its function is as follows. Carrier of the growing fatty acid chain in fatty acid biosynthesis. This is Acyl carrier protein from Akkermansia muciniphila (strain ATCC BAA-835 / DSM 22959 / JCM 33894 / BCRC 81048 / CCUG 64013 / CIP 107961 / Muc).